The sequence spans 506 residues: Galactose/methyl galactoside import ATP-binding protein MglA (506 aa).

ABC transporter domains are found at residues 14 to 249 (LEMR…VGRS) and 259 to 506 (NKPG…SLHL). 46–53 (GENGAGKS) lines the ATP pocket.

It belongs to the ABC transporter superfamily. Galactose/methyl galactoside importer (TC 3.A.1.2.3) family. As to quaternary structure, the complex is composed of one ATP-binding protein (MglA), two transmembrane proteins (MglC) and a solute-binding protein (MglB).

The protein localises to the cell inner membrane. The catalysed reaction is D-galactose(out) + ATP + H2O = D-galactose(in) + ADP + phosphate + H(+). It catalyses the reaction methyl beta-D-galactoside(out) + ATP + H2O = methyl beta-D-galactoside(in) + ADP + phosphate + H(+). Its activity is regulated as follows. Stimulated 3-fold by galactose and inhibited by vanadate, N-ethylmaleimide, and 5-methoxyindole-2-carboxylic acid. In terms of biological role, part of the ABC transporter complex MglABC involved in galactose/methyl galactoside import. Responsible for energy coupling to the transport system. The sequence is that of Galactose/methyl galactoside import ATP-binding protein MglA from Salmonella typhimurium (strain LT2 / SGSC1412 / ATCC 700720).